The chain runs to 299 residues: UDP-3-O-acyl-N-acetylglucosamine deacetylase (299 aa).

Residues histidine 75, histidine 232, and aspartate 236 each coordinate Zn(2+). Histidine 259 acts as the Proton donor in catalysis.

The protein belongs to the LpxC family. Zn(2+) serves as cofactor.

The enzyme catalyses a UDP-3-O-[(3R)-3-hydroxyacyl]-N-acetyl-alpha-D-glucosamine + H2O = a UDP-3-O-[(3R)-3-hydroxyacyl]-alpha-D-glucosamine + acetate. Its pathway is glycolipid biosynthesis; lipid IV(A) biosynthesis; lipid IV(A) from (3R)-3-hydroxytetradecanoyl-[acyl-carrier-protein] and UDP-N-acetyl-alpha-D-glucosamine: step 2/6. In terms of biological role, catalyzes the hydrolysis of UDP-3-O-myristoyl-N-acetylglucosamine to form UDP-3-O-myristoylglucosamine and acetate, the committed step in lipid A biosynthesis. The protein is UDP-3-O-acyl-N-acetylglucosamine deacetylase of Helicobacter hepaticus (strain ATCC 51449 / 3B1).